The sequence spans 348 residues: MYTAIPQSGSPFPGSVQDPGLHVWRVEKLKPVPVAQENQGVFFSGDSYLVLHNGPEEVSHLHLWIGQQSSRDEQGACAVLAVHLNTLLGERPVQHREVQGNESDLFMSYFPRGLKYQEGGVESAFHKTSTGAPAAIKKLYQVKGKKNIRATERALNWDSFNTGDCFILDLGQNIFAWCGGKSNILERNKARDLALAIRDSERQGKAQVEIVTDGEEPAEMIQVLGPKPALKEGNPEEDLTADKANAQAAALYKVSDATGQMNLTKVADSSPFALELLISDDCFVLDNGLCGKIYIWKGRKANEKERQAALQVAEGFISRMQYAPNTQVEILPQGHESPIFKQFFKDWK.

Residue M1 is modified to N-acetylmethionine. The Gelsolin-like 1 repeat unit spans residues 27-75; that stretch reads EKLKPVPVAQENQGVFFSGDSYLVLHNGPEEVSHLHLWIGQQSSRDEQG. A Nuclear localization signal motif is present at residues 137–146; sequence KKLYQVKGKK. Gelsolin-like repeat units follow at residues 148–188 and 261–307; these read IRAT…LERN and MNLT…KERQ. S337 carries the phosphoserine modification.

The protein belongs to the villin/gelsolin family. Interacts with NUP62. Interacts with NUTF2 and RAN; involved in CAPG nuclear import. In terms of processing, the N-terminus is blocked. Macrophages and macrophage-like cells.

Its subcellular location is the nucleus. The protein localises to the cytoplasm. It localises to the melanosome. It is found in the cell projection. The protein resides in the lamellipodium. Its subcellular location is the ruffle. Its function is as follows. Calcium-sensitive protein which reversibly blocks the barbed ends of actin filaments but does not sever preformed actin filaments. May play an important role in macrophage function. May play a role in regulating cytoplasmic and/or nuclear structures through potential interactions with actin. May bind DNA. The protein is Macrophage-capping protein (CAPG) of Homo sapiens (Human).